The following is a 346-amino-acid chain: MDTGPDQSYFSGNHWFVFSVYLLTFLVGLPLNLLALVVFVGKLRCRPVAVDVLLLNLTASDLLLLLFLPFRMVEAANGMHWPLPFILCPLSGFIFFTTIYLTALFLAAVSIERFLSVAHPLWYKTRPRLGQAGLVSVACWLLASAHCSVVYVIEFSGDISHSQGTNGTCYLEFRKDQLAILLPVRLEMAVVLFVVPLIITSYCYSRLVWILGRGGSHRRQRRVAGLVAATLLNFLVCFGPYNVSHVVGYICGESPVWRIYVTLLSTLNSCVDPFVYYFSSSGFQADFHELLRRLCGLWGQWQQESSMELKEQKGGEEQRADRPAERKTSEHSQGCGTGGQVACAEN.

Topologically, residues 1–19 are extracellular; it reads MDTGPDQSYFSGNHWFVFS. Residues 20-40 form a helical membrane-spanning segment; the sequence is VYLLTFLVGLPLNLLALVVFV. The Cytoplasmic segment spans residues 41–47; that stretch reads GKLRCRP. The helical transmembrane segment at 48 to 68 threads the bilayer; it reads VAVDVLLLNLTASDLLLLLFL. Residues 69–90 lie on the Extracellular side of the membrane; that stretch reads PFRMVEAANGMHWPLPFILCPL. Residues 91 to 111 form a helical membrane-spanning segment; that stretch reads SGFIFFTTIYLTALFLAAVSI. Over 112 to 132 the chain is Cytoplasmic; it reads ERFLSVAHPLWYKTRPRLGQA. A helical membrane pass occupies residues 133 to 153; it reads GLVSVACWLLASAHCSVVYVI. The Extracellular segment spans residues 154–178; sequence EFSGDISHSQGTNGTCYLEFRKDQL. Asn166 carries N-linked (GlcNAc...) asparagine glycosylation. Residues 179-199 traverse the membrane as a helical segment; that stretch reads AILLPVRLEMAVVLFVVPLII. The Cytoplasmic portion of the chain corresponds to 200-222; sequence TSYCYSRLVWILGRGGSHRRQRR. The helical transmembrane segment at 223 to 243 threads the bilayer; the sequence is VAGLVAATLLNFLVCFGPYNV. Residues 244-258 lie on the Extracellular side of the membrane; sequence SHVVGYICGESPVWR. A helical membrane pass occupies residues 259–279; it reads IYVTLLSTLNSCVDPFVYYFS. Topologically, residues 280–346 are cytoplasmic; it reads SSGFQADFHE…TGGQVACAEN (67 aa). Over residues 307-330 the composition is skewed to basic and acidic residues; it reads MELKEQKGGEEQRADRPAERKTSE. Residues 307–346 form a disordered region; that stretch reads MELKEQKGGEEQRADRPAERKTSEHSQGCGTGGQVACAEN.

The protein belongs to the G-protein coupled receptor 1 family.

It localises to the cell membrane. G protein-coupled receptor that is activated by short chain fatty acids (SCFAs), such as propionate. Hence may play a role in the regulation of whole-body energy homeostasis and/or in intestinal immunity. In Homo sapiens (Human), this protein is G-protein coupled receptor 42 (GPR42).